Here is a 60-residue protein sequence, read N- to C-terminus: Large ribosomal subunit protein uL30 (60 aa).

This sequence belongs to the universal ribosomal protein uL30 family. As to quaternary structure, part of the 50S ribosomal subunit.

The polypeptide is Large ribosomal subunit protein uL30 (Streptococcus equi subsp. equi (strain 4047)).